Here is a 167-residue protein sequence, read N- to C-terminus: Antibacterial peptide PMAP-37 (167 aa).

An N-terminal signal peptide occupies residues 1 to 29 (METQRASLCLGRWSLWLLLLALVVPSASA). A propeptide spanning residues 30 to 130 (QALSYREAVL…DITCNEIQSV (101 aa)) is cleaved from the precursor. 2 disulfides stabilise this stretch: Cys85–Cys96 and Cys107–Cys124.

Belongs to the cathelicidin family.

It localises to the secreted. Functionally, exerts antimicrobial activity against both Gram-positive and negative bacteria with minimal inhibitory concentrations ranging over 1-4 micro molar. Its activity appears to be mediated by its ability to damage bacterial membranes. This Sus scrofa (Pig) protein is Antibacterial peptide PMAP-37 (PMAP37).